Reading from the N-terminus, the 446-residue chain is Trigger factor (446 aa).

The 86-residue stretch at 161–246 folds into the PPIase FKBP-type domain; the sequence is GDRLTIDFKG…VSKVERSELP (86 aa). The segment at 422–446 is disordered; that stretch reads VSYEDAVKPRTAPAEQAEDGEQSAE. Residues 437–446 show a composition bias toward acidic residues; that stretch reads QAEDGEQSAE.

The protein belongs to the FKBP-type PPIase family. Tig subfamily.

The protein resides in the cytoplasm. It carries out the reaction [protein]-peptidylproline (omega=180) = [protein]-peptidylproline (omega=0). In terms of biological role, involved in protein export. Acts as a chaperone by maintaining the newly synthesized protein in an open conformation. Functions as a peptidyl-prolyl cis-trans isomerase. The chain is Trigger factor from Hahella chejuensis (strain KCTC 2396).